Consider the following 40-residue polypeptide: Ribosome-inactivating protein saporin-1 (40 aa).

Belongs to the ribosome-inactivating protein family. Type 1 RIP subfamily.

The catalysed reaction is Endohydrolysis of the N-glycosidic bond at one specific adenosine on the 28S rRNA.. In terms of biological role, ribosome-inactivating protein of type 1, inhibits protein synthesis in animal cells. The sequence is that of Ribosome-inactivating protein saporin-1 (SAP1) from Saponaria officinalis (Common soapwort).